We begin with the raw amino-acid sequence, 56 residues long: Cecropin-A2 (56 aa).

At Arg-55 the chain carries Arginine amide.

This sequence belongs to the cecropin family.

It localises to the secreted. Functionally, cecropins have lytic and antibacterial activity against several Gram-positive and Gram-negative bacteria. The sequence is that of Cecropin-A2 (CecA2) from Drosophila yakuba (Fruit fly).